A 386-amino-acid chain; its full sequence is ATP phosphoribosyltransferase regulatory subunit (386 aa).

This sequence belongs to the class-II aminoacyl-tRNA synthetase family. HisZ subfamily. As to quaternary structure, heteromultimer composed of HisG and HisZ subunits.

Its subcellular location is the cytoplasm. Its pathway is amino-acid biosynthesis; L-histidine biosynthesis; L-histidine from 5-phospho-alpha-D-ribose 1-diphosphate: step 1/9. In terms of biological role, required for the first step of histidine biosynthesis. May allow the feedback regulation of ATP phosphoribosyltransferase activity by histidine. This chain is ATP phosphoribosyltransferase regulatory subunit, found in Variovorax paradoxus (strain S110).